The primary structure comprises 80 residues: UPF0346 protein LSEI_1394 (80 aa).

Belongs to the UPF0346 family.

The chain is UPF0346 protein LSEI_1394 from Lacticaseibacillus paracasei (strain ATCC 334 / BCRC 17002 / CCUG 31169 / CIP 107868 / KCTC 3260 / NRRL B-441) (Lactobacillus paracasei).